Here is a 371-residue protein sequence, read N- to C-terminus: 4-hydroxy-3-methylbut-2-en-1-yl diphosphate synthase (flavodoxin) (371 aa).

Positions 270, 273, 305, and 312 each coordinate [4Fe-4S] cluster.

Belongs to the IspG family. It depends on [4Fe-4S] cluster as a cofactor.

It carries out the reaction (2E)-4-hydroxy-3-methylbut-2-enyl diphosphate + oxidized [flavodoxin] + H2O + 2 H(+) = 2-C-methyl-D-erythritol 2,4-cyclic diphosphate + reduced [flavodoxin]. It functions in the pathway isoprenoid biosynthesis; isopentenyl diphosphate biosynthesis via DXP pathway; isopentenyl diphosphate from 1-deoxy-D-xylulose 5-phosphate: step 5/6. Converts 2C-methyl-D-erythritol 2,4-cyclodiphosphate (ME-2,4cPP) into 1-hydroxy-2-methyl-2-(E)-butenyl 4-diphosphate. The chain is 4-hydroxy-3-methylbut-2-en-1-yl diphosphate synthase (flavodoxin) from Shewanella sediminis (strain HAW-EB3).